Consider the following 738-residue polypeptide: Transcription activator of gluconeogenesis SMAC_06113 (738 aa).

Residues 1–65 (MPDDVGPAEA…KYDPKDPLRP (65 aa)) are disordered. Composition is skewed to basic and acidic residues over residues 28–39 (ATTKDDDEKMAE) and 51–64 (GDQKKKYDPKDPLR). Positions 74-102 (CYACQRAHLTCGDERPCQRCIKRGLAEAC) form a DNA-binding region, zn(2)-C6 fungal-type. Disordered regions lie at residues 255 to 278 (SSGAAETPPRDPSISQQGTAGDVG), 328 to 404 (HAYA…KRQR), 530 to 579 (GTNS…KEQP), and 636 to 673 (SVPTTAGGSGSSNGTVVNGGPDSSPAGKTERERSTGAN). Polar residues-rich tracts occupy residues 337–351 (TSLQSPSTENNSPQP) and 530–540 (GTNSDTLSVSS). The PAS domain occupies 475 to 546 (ALFEHEEFMH…SVSSKGGRGG (72 aa)). Composition is skewed to low complexity over residues 568-579 (QQQQSQQQKEQP) and 636-655 (SVPTTAGGSGSSNGTVVNGG).

Belongs to the ERT1/acuK family.

It localises to the nucleus. In terms of biological role, transcription factor which regulates nonfermentable carbon utilization. Activator of gluconeogenetic genes. In Sordaria macrospora (strain ATCC MYA-333 / DSM 997 / K(L3346) / K-hell), this protein is Transcription activator of gluconeogenesis SMAC_06113.